Here is a 399-residue protein sequence, read N- to C-terminus: 1-deoxy-D-xylulose 5-phosphate reductoisomerase (399 aa).

Residues Thr11, Gly12, Ser13, Ile14, and Asn125 each contribute to the NADPH site. Lys126 is a binding site for 1-deoxy-D-xylulose 5-phosphate. Glu127 contacts NADPH. Residue Asp151 coordinates Mn(2+). 4 residues coordinate 1-deoxy-D-xylulose 5-phosphate: Ser152, Glu153, Ser186, and His209. Residue Glu153 participates in Mn(2+) binding. NADPH is bound at residue Gly215. Positions 222, 227, 228, and 231 each coordinate 1-deoxy-D-xylulose 5-phosphate. Glu231 lines the Mn(2+) pocket.

The protein belongs to the DXR family. The cofactor is Mg(2+). Requires Mn(2+) as cofactor.

The enzyme catalyses 2-C-methyl-D-erythritol 4-phosphate + NADP(+) = 1-deoxy-D-xylulose 5-phosphate + NADPH + H(+). It participates in isoprenoid biosynthesis; isopentenyl diphosphate biosynthesis via DXP pathway; isopentenyl diphosphate from 1-deoxy-D-xylulose 5-phosphate: step 1/6. Catalyzes the NADPH-dependent rearrangement and reduction of 1-deoxy-D-xylulose-5-phosphate (DXP) to 2-C-methyl-D-erythritol 4-phosphate (MEP). The chain is 1-deoxy-D-xylulose 5-phosphate reductoisomerase from Acinetobacter baumannii (strain SDF).